The chain runs to 268 residues: Small ribosomal subunit protein uS10m (268 aa).

The transit peptide at 1-64 (MIIRPVVRSL…RITTTTEAPK (64 aa)) directs the protein to the mitochondrion.

The protein belongs to the universal ribosomal protein uS10 family. Component of the mitochondrial small ribosomal subunit (mt-SSU). Mature N.crassa 74S mitochondrial ribosomes consist of a small (37S) and a large (54S) subunit. The 37S small subunit contains a 16S ribosomal RNA (16S mt-rRNA) and 32 different proteins. The 54S large subunit contains a 23S rRNA (23S mt-rRNA) and 42 different proteins.

The protein localises to the mitochondrion. Component of the mitochondrial ribosome (mitoribosome), a dedicated translation machinery responsible for the synthesis of mitochondrial genome-encoded proteins, including at least some of the essential transmembrane subunits of the mitochondrial respiratory chain. The mitoribosomes are attached to the mitochondrial inner membrane and translation products are cotranslationally integrated into the membrane. The polypeptide is Small ribosomal subunit protein uS10m (mrp-10) (Neurospora crassa (strain ATCC 24698 / 74-OR23-1A / CBS 708.71 / DSM 1257 / FGSC 987)).